The chain runs to 150 residues: Protein Turandot X (150 aa).

The first 22 residues, M1–A22, serve as a signal peptide directing secretion. Residues R127 to K150 form a disordered region. Over residues S132–K150 the composition is skewed to polar residues.

Belongs to the Turandot family.

Its subcellular location is the secreted. A humoral factor that may play a role in stress tolerance. In Drosophila simulans (Fruit fly), this protein is Protein Turandot X.